The following is a 931-amino-acid chain: Dual serine/threonine and tyrosine protein kinase (931 aa).

Residues 1 to 24 (MEGDAPQRVSERVSGPGPGGGGGG) form a disordered region. A coiled-coil region spans residues 397–424 (RKKENELYESLMNIANRKQEEMKDMICE). The region spanning 654–908 (PKLGQELGRG…PLLGIVQPML (255 aa)) is the Protein kinase domain. ATP contacts are provided by residues 660-668 (LGRGQYGVV) and Lys-683. Asp-779 (proton acceptor) is an active-site residue.

Belongs to the protein kinase superfamily. Ser/Thr protein kinase family.

Its subcellular location is the cytoplasm. The protein localises to the cell membrane. It is found in the apical cell membrane. The protein resides in the basolateral cell membrane. It localises to the cell junction. It carries out the reaction L-seryl-[protein] + ATP = O-phospho-L-seryl-[protein] + ADP + H(+). It catalyses the reaction L-threonyl-[protein] + ATP = O-phospho-L-threonyl-[protein] + ADP + H(+). The enzyme catalyses L-tyrosyl-[protein] + ATP = O-phospho-L-tyrosyl-[protein] + ADP + H(+). In terms of biological role, acts as a positive regulator of ERK phosphorylation downstream of fibroblast growth factor-receptor activation. Involved in the regulation of both caspase-dependent apoptosis and caspase-independent cell death. In the skin, it plays a predominant role in suppressing caspase-dependent apoptosis in response to UV stress in a range of dermal cell types. The chain is Dual serine/threonine and tyrosine protein kinase (DSTYK) from Canis lupus familiaris (Dog).